We begin with the raw amino-acid sequence, 112 residues long: ATP synthase epsilon chain (112 aa).

Belongs to the ATPase epsilon chain family. As to quaternary structure, F-type ATPases have 2 components, CF(1) - the catalytic core - and CF(0) - the membrane proton channel. CF(1) has five subunits: alpha(3), beta(3), gamma(1), delta(1), epsilon(1). CF(0) has three main subunits: a, b and c.

It localises to the cell membrane. In terms of biological role, produces ATP from ADP in the presence of a proton gradient across the membrane. The polypeptide is ATP synthase epsilon chain (Rickettsia africae (strain ESF-5)).